Reading from the N-terminus, the 348-residue chain is Peptidyl-Lys metalloendopeptidase (348 aa).

Residues 1-18 (MFSSVMVALVSLAVAVSA) form the signal peptide. A propeptide spanning residues 19-181 (NPGLSLKVSG…RATPTLTRPV (163 aa)) is cleaved from the precursor. 2 disulfides stabilise this stretch: Cys-186/Cys-256 and Cys-258/Cys-278. Thr-223 is a glycosylation site (O-linked (Man) threonine; partial). Position 298 (His-298) interacts with Zn(2+). Glu-299 is a catalytic residue. Zn(2+) is bound by residues His-302 and Asp-311.

It depends on Zn(2+) as a cofactor.

It is found in the secreted. It carries out the reaction Preferential cleavage in proteins: -Xaa-|-Lys- (in which Xaa may be Pro).. Its activity is regulated as follows. Inhibited by chelating agents such as EDTA and 1,10-phenanthroline. In Grifola frondosa (Maitake), this protein is Peptidyl-Lys metalloendopeptidase (MEP).